We begin with the raw amino-acid sequence, 314 residues long: Probable 5-dehydro-4-deoxyglucarate dehydratase (314 aa).

The protein belongs to the DapA family.

The enzyme catalyses 5-dehydro-4-deoxy-D-glucarate + H(+) = 2,5-dioxopentanoate + CO2 + H2O. It participates in carbohydrate acid metabolism; D-glucarate degradation; 2,5-dioxopentanoate from D-glucarate: step 2/2. The chain is Probable 5-dehydro-4-deoxyglucarate dehydratase from Bradyrhizobium sp. (strain ORS 278).